The sequence spans 232 residues: Urease accessory protein UreF (232 aa).

This sequence belongs to the UreF family. As to quaternary structure, ureD, UreF and UreG form a complex that acts as a GTP-hydrolysis-dependent molecular chaperone, activating the urease apoprotein by helping to assemble the nickel containing metallocenter of UreC. The UreE protein probably delivers the nickel.

The protein resides in the cytoplasm. Required for maturation of urease via the functional incorporation of the urease nickel metallocenter. The sequence is that of Urease accessory protein UreF from Azorhizobium caulinodans (strain ATCC 43989 / DSM 5975 / JCM 20966 / LMG 6465 / NBRC 14845 / NCIMB 13405 / ORS 571).